We begin with the raw amino-acid sequence, 238 residues long: FAVAFAAPIDDEDDKIVGGYECRKNSASYQASLQSGYHFCGGSLISSTWVVSAAHCYKSRIQVRLGEHNIAVNEGTEQFIDSVKVIMHPSYNSRNLDNDIMLIKLSKPASLNSYVSTVALPSSCASSGTRCLVSGWGNLSGSSSNYPDTLRCLDLPILSSSSCNSAYPGQITSNMFCAGFMEGGKDSCQGDSGGPVVCNGQLQGVVSWGYGCAQRNKPGVYTKVCNYRSWISSTMSSN.

The N-terminal stretch at 1-7 (FAVAFAA) is a signal peptide. Residues 8-15 (PIDDEDDK) constitute a propeptide, activation peptide. The 221-residue stretch at 16–236 (IVGGYECRKN…YRSWISSTMS (221 aa)) folds into the Peptidase S1 domain. 6 disulfide bridges follow: cysteine 22/cysteine 152, cysteine 40/cysteine 56, cysteine 124/cysteine 225, cysteine 131/cysteine 198, cysteine 163/cysteine 177, and cysteine 188/cysteine 212. Histidine 55 serves as the catalytic Charge relay system. Ca(2+) contacts are provided by glutamate 67, asparagine 69, valine 72, and glutamate 77. Aspartate 99 functions as the Charge relay system in the catalytic mechanism. The Charge relay system role is filled by serine 192.

Belongs to the peptidase S1 family. Ca(2+) serves as cofactor.

Its subcellular location is the secreted. The protein localises to the extracellular space. The enzyme catalyses Preferential cleavage: Arg-|-Xaa, Lys-|-Xaa.. The polypeptide is Trypsin-3 (Salmo salar (Atlantic salmon)).